Here is a 256-residue protein sequence, read N- to C-terminus: Deoxyribose-phosphate aldolase (256 aa).

The active-site Proton donor/acceptor is the aspartate 102. The Schiff-base intermediate with acetaldehyde role is filled by lysine 165. Catalysis depends on lysine 197, which acts as the Proton donor/acceptor.

It belongs to the DeoC/FbaB aldolase family. DeoC type 2 subfamily.

It localises to the cytoplasm. It catalyses the reaction 2-deoxy-D-ribose 5-phosphate = D-glyceraldehyde 3-phosphate + acetaldehyde. Its pathway is carbohydrate degradation; 2-deoxy-D-ribose 1-phosphate degradation; D-glyceraldehyde 3-phosphate and acetaldehyde from 2-deoxy-alpha-D-ribose 1-phosphate: step 2/2. Catalyzes a reversible aldol reaction between acetaldehyde and D-glyceraldehyde 3-phosphate to generate 2-deoxy-D-ribose 5-phosphate. In Shewanella sp. (strain W3-18-1), this protein is Deoxyribose-phosphate aldolase.